The following is an 87-amino-acid chain: SGAAAAQTAAASSLHQASNHTFYPWMAIAGESTADPSKSKIRSDLTQYGGISTDMGKRYSESLAGSLLPDWLGTNGLRRRGRQTYTR.

The Antp-type hexapeptide motif lies at 22–27 (FYPWMA).

This sequence belongs to the Antp homeobox family. In the embryo, expression is seen in the epidermis, somatic and visceral mesoderm, and the peripheral and central nervous system.

It is found in the nucleus. In terms of biological role, sequence-specific transcription factor which is part of a developmental regulatory system that provides cells with specific positional identities on the anterior-posterior axis. Binds the consensus region 5'-TTAAT[GT][GA]-3'. This homeotic protein controls development of the cells in the posterior thoracic and first abdominal segments. It activates the synthesis of the decapentaplegic (DPP) growth factor. This chain is Homeotic protein ultrabithorax (Ubx), found in Drosophila virilis (Fruit fly).